A 115-amino-acid chain; its full sequence is NADH-ubiquinone oxidoreductase chain 3 (115 aa).

The next 3 helical transmembrane spans lie at 4-24 (ILTLFINITLSLCLISIAFWL), 55-75 (FFLVGITFLLFDLEIALLLPL), and 84-104 (SYLTMTVSFMLVSALALGLAY).

Belongs to the complex I subunit 3 family. In terms of assembly, core subunit of respiratory chain NADH dehydrogenase (Complex I) which is composed of 45 different subunits. Interacts with TMEM186. Interacts with TMEM242.

It is found in the mitochondrion inner membrane. The catalysed reaction is a ubiquinone + NADH + 5 H(+)(in) = a ubiquinol + NAD(+) + 4 H(+)(out). Functionally, core subunit of the mitochondrial membrane respiratory chain NADH dehydrogenase (Complex I) which catalyzes electron transfer from NADH through the respiratory chain, using ubiquinone as an electron acceptor. Essential for the catalytic activity of complex I. The sequence is that of NADH-ubiquinone oxidoreductase chain 3 from Necromys lactens (Rufous-bellied bolo mouse).